A 288-amino-acid polypeptide reads, in one-letter code: 4-diphosphocytidyl-2-C-methyl-D-erythritol kinase (288 aa).

Lys22 is an active-site residue. 104 to 114 (PSQAGLGGGSS) lines the ATP pocket. Residue Asp146 is part of the active site.

This sequence belongs to the GHMP kinase family. IspE subfamily.

The catalysed reaction is 4-CDP-2-C-methyl-D-erythritol + ATP = 4-CDP-2-C-methyl-D-erythritol 2-phosphate + ADP + H(+). The protein operates within isoprenoid biosynthesis; isopentenyl diphosphate biosynthesis via DXP pathway; isopentenyl diphosphate from 1-deoxy-D-xylulose 5-phosphate: step 3/6. Catalyzes the phosphorylation of the position 2 hydroxy group of 4-diphosphocytidyl-2C-methyl-D-erythritol. The sequence is that of 4-diphosphocytidyl-2-C-methyl-D-erythritol kinase from Protochlamydia amoebophila (strain UWE25).